The following is a 146-amino-acid chain: NADH-quinone oxidoreductase subunit A (146 aa).

Transmembrane regions (helical) follow at residues 4–24 (IYHW…VFML), 63–83 (LIAM…AWAI), and 91–111 (IGFS…IYLI).

Belongs to the complex I subunit 3 family. In terms of assembly, NDH-1 is composed of 13 different subunits. Subunits NuoA, H, J, K, L, M, N constitute the membrane sector of the complex.

The protein localises to the cell inner membrane. The enzyme catalyses a quinone + NADH + 5 H(+)(in) = a quinol + NAD(+) + 4 H(+)(out). Its function is as follows. NDH-1 shuttles electrons from NADH, via FMN and iron-sulfur (Fe-S) centers, to quinones in the respiratory chain. The immediate electron acceptor for the enzyme in this species is believed to be ubiquinone. Couples the redox reaction to proton translocation (for every two electrons transferred, four hydrogen ions are translocated across the cytoplasmic membrane), and thus conserves the redox energy in a proton gradient. The sequence is that of NADH-quinone oxidoreductase subunit A from Blochmanniella pennsylvanica (strain BPEN).